Reading from the N-terminus, the 389-residue chain is S-adenosylmethionine synthase (389 aa).

H17 contacts ATP. D19 is a Mg(2+) binding site. E45 contributes to the K(+) binding site. Residues E58 and Q101 each contribute to the L-methionine site. Residues 101-111 form a flexible loop region; that stretch reads QSPDISQGVDG. ATP is bound by residues 170–172, 237–238, D246, 252–253, A269, and K273; these read DSK, RF, and RK. L-methionine is bound at residue D246. An L-methionine-binding site is contributed by K277.

This sequence belongs to the AdoMet synthase family. In terms of assembly, homotetramer; dimer of dimers. Requires Mg(2+) as cofactor. K(+) serves as cofactor.

The protein resides in the cytoplasm. The catalysed reaction is L-methionine + ATP + H2O = S-adenosyl-L-methionine + phosphate + diphosphate. It functions in the pathway amino-acid biosynthesis; S-adenosyl-L-methionine biosynthesis; S-adenosyl-L-methionine from L-methionine: step 1/1. In terms of biological role, catalyzes the formation of S-adenosylmethionine (AdoMet) from methionine and ATP. The overall synthetic reaction is composed of two sequential steps, AdoMet formation and the subsequent tripolyphosphate hydrolysis which occurs prior to release of AdoMet from the enzyme. The protein is S-adenosylmethionine synthase of Treponema denticola (strain ATCC 35405 / DSM 14222 / CIP 103919 / JCM 8153 / KCTC 15104).